A 376-amino-acid polypeptide reads, in one-letter code: MAKRDYYEVLGVSKSASADEIKKAYRKLSKQYHPDINKEAGADEKFKEISEAYEALSDPQKRAQYDQYGHVDPNQGFGGGAGGGFSGGGFSGFEDIFDTFFGGGGRQQDPNAPRQGSDLQYTMRLKFKEAIFGKDAEIEIPREENCDTCHGSGAKPGTTPEKCSHCGGKGSINVEQNTPFGRVVNKRTCQYCNGTGKEIKEKCPTCHGKGRVTKTKKIKVKVPAGVNDGQQMRVSGEGEAGINGGPNGDLYVVFVVIPDEFFEREADDIYVEVPITFVQATLGDEIDVPTVHGKVRLKIPSGTQTGTTFRLRGKGVPHLRGNGTGDQHVIVKVIVPKKLDDKQKEILREFASTTGDKVDEQTSGFFDKMKRAFKGD.

Positions 5–69 constitute a J domain; it reads DYYEVLGVSK…QKRAQYDQYG (65 aa). Residues 133 to 215 form a CR-type zinc finger; sequence GKDAEIEIPR…CHGKGRVTKT (83 aa). Zn(2+)-binding residues include Cys-146, Cys-149, Cys-163, Cys-166, Cys-189, Cys-192, Cys-203, and Cys-206. 4 CXXCXGXG motif repeats span residues 146 to 153, 163 to 170, 189 to 196, and 203 to 210; these read CDTCHGSG, CSHCGGKG, CQYCNGTG, and CPTCHGKG.

The protein belongs to the DnaJ family. As to quaternary structure, homodimer. The cofactor is Zn(2+).

It localises to the cytoplasm. Functionally, participates actively in the response to hyperosmotic and heat shock by preventing the aggregation of stress-denatured proteins and by disaggregating proteins, also in an autonomous, DnaK-independent fashion. Unfolded proteins bind initially to DnaJ; upon interaction with the DnaJ-bound protein, DnaK hydrolyzes its bound ATP, resulting in the formation of a stable complex. GrpE releases ADP from DnaK; ATP binding to DnaK triggers the release of the substrate protein, thus completing the reaction cycle. Several rounds of ATP-dependent interactions between DnaJ, DnaK and GrpE are required for fully efficient folding. Also involved, together with DnaK and GrpE, in the DNA replication of plasmids through activation of initiation proteins. The protein is Chaperone protein DnaJ of Listeria monocytogenes serotype 4b (strain CLIP80459).